The sequence spans 429 residues: Trigger factor (429 aa).

The 86-residue stretch at 163–248 folds into the PPIase FKBP-type domain; sequence GDFVVIDFVG…IKEIKVKETP (86 aa).

The protein belongs to the FKBP-type PPIase family. Tig subfamily.

The protein localises to the cytoplasm. The catalysed reaction is [protein]-peptidylproline (omega=180) = [protein]-peptidylproline (omega=0). Functionally, involved in protein export. Acts as a chaperone by maintaining the newly synthesized protein in an open conformation. Functions as a peptidyl-prolyl cis-trans isomerase. The protein is Trigger factor of Halothermothrix orenii (strain H 168 / OCM 544 / DSM 9562).